The sequence spans 462 residues: A-type ATP synthase subunit B (462 aa).

It belongs to the ATPase alpha/beta chains family. As to quaternary structure, has multiple subunits with at least A(3), B(3), C, D, E, F, H, I and proteolipid K(x).

The protein localises to the cell membrane. Functionally, component of the A-type ATP synthase that produces ATP from ADP in the presence of a proton gradient across the membrane. The B chain is a regulatory subunit. This Pyrococcus furiosus (strain ATCC 43587 / DSM 3638 / JCM 8422 / Vc1) protein is A-type ATP synthase subunit B.